The primary structure comprises 260 residues: 3beta-hydroxysteroid dehydrogenase 2 (260 aa).

Residues D43, 69 to 70 (DV), N96, Y163, and K167 each bind NAD(+). Y163 (proton acceptor) is an active-site residue.

This sequence belongs to the short-chain dehydrogenases/reductases (SDR) family.

It catalyses the reaction 3-oxo-5beta-cholan-24-oate + NADH + H(+) = isolithocholate + NAD(+). The enzyme catalyses 12alpha-hydroxy-3-oxo-5beta-cholan-24-oate + NADH + H(+) = isodeoxycholate + NAD(+). The catalysed reaction is 12alpha-hydroxy-3-oxo-5beta-cholan-24-oate + NADPH + H(+) = isodeoxycholate + NADP(+). It carries out the reaction 7alpha,12alpha-dihydroxy-3-oxo-5beta-cholan-24-oate + NADH + H(+) = isocholate + NAD(+). It catalyses the reaction 3-oxochenodeoxycholate + NADH + H(+) = isochenodeoxycholate + NAD(+). Functionally, involved in the modification of secondary bile acids into iso-bile acids (3beta-bile acids) via epimerization of the 3-OH group through a 3-oxo-intermediate. Catalyzes the reduction of 12-alpha-hydroxy-3-oxo-5-beta-cholan-24-oate (3-oxo-DCA) and 3-oxo-5-beta-cholan-24-oate (3-oxo-LCA) to yield isodeoxycholate (isoDCA) and isolithocholate (isoLCA), respectively. Is also able to catalyze the reduction of 3-dehydrocholate (3-oxo-CA or 7alpha,12alpha-dihydroxy-3-oxo-5beta-cholan-24-oate) and 7-alpha-hydroxy-3-oxo-5-beta-cholan-24-oate (3-oxo-CDCA), into isocholate (isoCA) and isochenodeoxycholate (isoCDCA), respectively. Accepts both NADH and NADPH as cosubstrates. The conversion of the abundant bile acid deoxycholate (DCA) into isoDCA by the gut bacterium E.lenta favors the growth of the keystone commensal genus Bacteroides, since isoDCA is less cytotoxic than its parent compound, DCA; iso-bile acids have thus a potential role in modulating gut community composition. This is 3beta-hydroxysteroid dehydrogenase 2 from Eggerthella lenta (strain ATCC 25559 / DSM 2243 / CCUG 17323 / JCM 9979 / KCTC 3265 / NCTC 11813 / VPI 0255 / 1899 B) (Eubacterium lentum).